Reading from the N-terminus, the 252-residue chain is UPF0246 protein LJ_0535 (252 aa).

The protein belongs to the UPF0246 family.

This Lactobacillus johnsonii (strain CNCM I-12250 / La1 / NCC 533) protein is UPF0246 protein LJ_0535.